The sequence spans 346 residues: NADH-ubiquinone oxidoreductase chain 2 (346 aa).

10 helical membrane passes run 25 to 45, 52 to 72, 95 to 115, 124 to 144, 149 to 169, 178 to 198, 200 to 220, 242 to 262, 274 to 294, and 326 to 346; these read HWIL…PLIS, AIEA…LILF, CLML…HFWF, LITA…LLLL, LNTT…GWMG, ILAF…SYNP, LTIL…LSLA, ATVM…GFMP, EMTP…FFYL, and AILT…ITML.

This sequence belongs to the complex I subunit 2 family. Core subunit of respiratory chain NADH dehydrogenase (Complex I) which is composed of 45 different subunits.

The protein resides in the mitochondrion inner membrane. It catalyses the reaction a ubiquinone + NADH + 5 H(+)(in) = a ubiquinol + NAD(+) + 4 H(+)(out). In terms of biological role, core subunit of the mitochondrial membrane respiratory chain NADH dehydrogenase (Complex I) which catalyzes electron transfer from NADH through the respiratory chain, using ubiquinone as an electron acceptor. Essential for the catalytic activity and assembly of complex I. The polypeptide is NADH-ubiquinone oxidoreductase chain 2 (MT-ND2) (Gallus gallus (Chicken)).